A 1289-amino-acid chain; its full sequence is uncharacterized protein (1289 aa).

The N-terminal stretch at 1 to 23 (MRKYTVIASILLSFLSVLSGGHH) is a signal peptide. In terms of domain architecture, LTD spans 141–277 (EGYQADLAHI…VVISTNTGKD (137 aa)).

This is an uncharacterized protein from Bacillus subtilis (strain 168).